The primary structure comprises 129 residues: Small ribosomal subunit protein uS9 (129 aa).

It belongs to the universal ribosomal protein uS9 family.

In Helicobacter pylori (strain P12), this protein is Small ribosomal subunit protein uS9.